A 789-amino-acid polypeptide reads, in one-letter code: Phenylalanine--tRNA ligase beta subunit (789 aa).

In terms of domain architecture, tRNA-binding spans 38–151 (KKHLQSFVVV…NTYNVGESFF (114 aa)). In terms of domain architecture, B5 spans 398 to 474 (HNDILLNFSP…RLYGYDKILE (77 aa)). 4 residues coordinate Mg(2+): Asp-452, Asp-458, Glu-461, and Glu-462. The FDX-ACB domain maps to 694–787 (LRYQSVKRDF…ISKGFNGILR (94 aa)).

Belongs to the phenylalanyl-tRNA synthetase beta subunit family. Type 1 subfamily. As to quaternary structure, tetramer of two alpha and two beta subunits. Mg(2+) serves as cofactor.

The protein resides in the cytoplasm. It catalyses the reaction tRNA(Phe) + L-phenylalanine + ATP = L-phenylalanyl-tRNA(Phe) + AMP + diphosphate + H(+). The polypeptide is Phenylalanine--tRNA ligase beta subunit (Ehrlichia ruminantium (strain Gardel)).